The primary structure comprises 307 residues: Ribonuclease Z (307 aa).

Residues His-63, His-65, Asp-67, His-68, His-141, Asp-212, and His-270 each coordinate Zn(2+). Asp-67 serves as the catalytic Proton acceptor.

This sequence belongs to the RNase Z family. In terms of assembly, homodimer. Zn(2+) serves as cofactor.

It catalyses the reaction Endonucleolytic cleavage of RNA, removing extra 3' nucleotides from tRNA precursor, generating 3' termini of tRNAs. A 3'-hydroxy group is left at the tRNA terminus and a 5'-phosphoryl group is left at the trailer molecule.. Its function is as follows. Zinc phosphodiesterase, which displays some tRNA 3'-processing endonuclease activity. Probably involved in tRNA maturation, by removing a 3'-trailer from precursor tRNA. The protein is Ribonuclease Z of Bacillus cereus (strain ATCC 14579 / DSM 31 / CCUG 7414 / JCM 2152 / NBRC 15305 / NCIMB 9373 / NCTC 2599 / NRRL B-3711).